A 520-amino-acid chain; its full sequence is Glutamate--cysteine ligase (520 aa).

Belongs to the glutamate--cysteine ligase type 1 family. Type 1 subfamily.

It catalyses the reaction L-cysteine + L-glutamate + ATP = gamma-L-glutamyl-L-cysteine + ADP + phosphate + H(+). Its pathway is sulfur metabolism; glutathione biosynthesis; glutathione from L-cysteine and L-glutamate: step 1/2. The chain is Glutamate--cysteine ligase from Leptospira interrogans serogroup Icterohaemorrhagiae serovar Lai (strain 56601).